A 347-amino-acid polypeptide reads, in one-letter code: Holliday junction branch migration complex subunit RuvB (347 aa).

The tract at residues 1-183 (MTDVPRMVTP…FGIPVRLNFY (183 aa)) is large ATPase domain (RuvB-L). Residues Leu-22, Arg-23, Gly-64, Lys-67, Thr-68, Thr-69, 130 to 132 (EDF), Arg-173, Tyr-183, and Arg-220 each bind ATP. Thr-68 lines the Mg(2+) pocket. The interval 184-254 (TVDELEKIVS…IADHALGALE (71 aa)) is small ATPAse domain (RuvB-S). A head domain (RuvB-H) region spans residues 257-347 (AAGLDAMDRR…QFGLFGGEDE (91 aa)). DNA contacts are provided by Arg-293, Arg-312, and Arg-317.

It belongs to the RuvB family. In terms of assembly, homohexamer. Forms an RuvA(8)-RuvB(12)-Holliday junction (HJ) complex. HJ DNA is sandwiched between 2 RuvA tetramers; dsDNA enters through RuvA and exits via RuvB. An RuvB hexamer assembles on each DNA strand where it exits the tetramer. Each RuvB hexamer is contacted by two RuvA subunits (via domain III) on 2 adjacent RuvB subunits; this complex drives branch migration. In the full resolvosome a probable DNA-RuvA(4)-RuvB(12)-RuvC(2) complex forms which resolves the HJ.

It localises to the cytoplasm. It carries out the reaction ATP + H2O = ADP + phosphate + H(+). The RuvA-RuvB-RuvC complex processes Holliday junction (HJ) DNA during genetic recombination and DNA repair, while the RuvA-RuvB complex plays an important role in the rescue of blocked DNA replication forks via replication fork reversal (RFR). RuvA specifically binds to HJ cruciform DNA, conferring on it an open structure. The RuvB hexamer acts as an ATP-dependent pump, pulling dsDNA into and through the RuvAB complex. RuvB forms 2 homohexamers on either side of HJ DNA bound by 1 or 2 RuvA tetramers; 4 subunits per hexamer contact DNA at a time. Coordinated motions by a converter formed by DNA-disengaged RuvB subunits stimulates ATP hydrolysis and nucleotide exchange. Immobilization of the converter enables RuvB to convert the ATP-contained energy into a lever motion, pulling 2 nucleotides of DNA out of the RuvA tetramer per ATP hydrolyzed, thus driving DNA branch migration. The RuvB motors rotate together with the DNA substrate, which together with the progressing nucleotide cycle form the mechanistic basis for DNA recombination by continuous HJ branch migration. Branch migration allows RuvC to scan DNA until it finds its consensus sequence, where it cleaves and resolves cruciform DNA. This chain is Holliday junction branch migration complex subunit RuvB, found in Nitrobacter hamburgensis (strain DSM 10229 / NCIMB 13809 / X14).